Consider the following 66-residue polypeptide: Large ribosomal subunit protein uL30 (66 aa).

Belongs to the universal ribosomal protein uL30 family. As to quaternary structure, part of the 50S ribosomal subunit.

This is Large ribosomal subunit protein uL30 from Azorhizobium caulinodans (strain ATCC 43989 / DSM 5975 / JCM 20966 / LMG 6465 / NBRC 14845 / NCIMB 13405 / ORS 571).